The following is a 238-amino-acid chain: Proteasome subunit beta type-6 (238 aa).

An N-acetylalanine modification is found at Ala-2. Positions 2-33 (AAALAVRGAVSAPAFGPEALTPDWENREVSTG) are cleaved as a propeptide — removed in mature form. Thr-34 functions as the Nucleophile in the catalytic mechanism. Thr-68 carries the phosphothreonine modification.

Belongs to the peptidase T1B family. The 26S proteasome consists of a 20S proteasome core and two 19S regulatory subunits. The 20S proteasome core is a barrel-shaped complex made of 28 subunits that are arranged in four stacked rings. The two outer rings are each formed by seven alpha subunits, and the two inner rings are formed by seven beta subunits. The proteolytic activity is exerted by three beta-subunits PSMB5, PSMB6 and PSMB7.

The protein localises to the cytoplasm. It localises to the nucleus. The enzyme catalyses Cleavage of peptide bonds with very broad specificity.. Functionally, component of the 20S core proteasome complex involved in the proteolytic degradation of most intracellular proteins. This complex plays numerous essential roles within the cell by associating with different regulatory particles. Associated with two 19S regulatory particles, forms the 26S proteasome and thus participates in the ATP-dependent degradation of ubiquitinated proteins. The 26S proteasome plays a key role in the maintenance of protein homeostasis by removing misfolded or damaged proteins that could impair cellular functions, and by removing proteins whose functions are no longer required. Associated with the PA200 or PA28, the 20S proteasome mediates ubiquitin-independent protein degradation. This type of proteolysis is required in several pathways including spermatogenesis (20S-PA200 complex) or generation of a subset of MHC class I-presented antigenic peptides (20S-PA28 complex). Within the 20S core complex, PSMB6 displays a peptidylglutamyl-hydrolyzing activity also termed postacidic or caspase-like activity, meaning that the peptides bond hydrolysis occurs directly after acidic residues. The polypeptide is Proteasome subunit beta type-6 (Psmb6) (Rattus norvegicus (Rat)).